The chain runs to 594 residues: Zinc finger protein 467 (594 aa).

The segment at 1–70 is disordered; it reads MRETLEALNS…HTEQAEAPCM (70 aa). Residue K97 forms a Glycyl lysine isopeptide (Lys-Gly) (interchain with G-Cter in SUMO2) linkage. 12 consecutive C2H2-type zinc fingers follow at residues 160 to 182, 188 to 210, 216 to 238, 244 to 266, 272 to 294, 300 to 322, 355 to 377, 430 to 452, 458 to 480, 486 to 508, 514 to 536, and 542 to 564; these read YGCE…QRLH, CACP…QRSH, FPCS…LRTH, YPCA…QKTH, FPCT…QRIH, YQCT…QRVH, FACS…QSLH, FFCP…RRVH, FACA…SRAH, FACA…QAVH, HACA…QAIH, and FSCP…QRIH. The segment at 313 to 350 is disordered; the sequence is QHLVRHQRVHDAASRTRSSPDIPATPHPPTASLAPSPT. K368 participates in a covalent cross-link: Glycyl lysine isopeptide (Lys-Gly) (interchain with G-Cter in SUMO2).

The protein belongs to the krueppel C2H2-type zinc-finger protein family. Interacts with STAT3. Enhances STAT3 activity by keeping it in the nucleus.

It localises to the nucleus. Its function is as follows. Transcription factor that promotes adipocyte differentiation and suppresses osteoblast differentiation in the bone marrow. Enhances the osteoclast-supporting ability of stromal cells. Binds with STAT3 the consensus sequence 5'-CTTCTGGGAAGA-3' of the acute phase response element (APRE). Transactivates several promoters including FOS, OSM and PPARG. Recruits a histone deacetylase complex. The protein is Zinc finger protein 467 (Znf467) of Rattus norvegicus (Rat).